A 396-amino-acid chain; its full sequence is NAD(P)H oxidoreductase RTN4IP1, mitochondrial (396 aa).

The N-terminal 40 residues, 1–40 (MGVLKTCVLRRSACAAACFWRRTVIPKPPFRGISTTSARS), are a transit peptide targeting the mitochondrion. One can recognise an Enoyl reductase (ER) domain in the interval 52-393 (GKNEVLRFTQ…RGHARGKTVV (342 aa)). Ser-214, Gly-216, Val-217, Ser-237, Tyr-255, Asn-276, Leu-300, Ala-341, Phe-343, His-386, Ala-387, and Arg-388 together coordinate NADPH.

This sequence belongs to the zinc-containing alcohol dehydrogenase family. Quinone oxidoreductase subfamily. As to quaternary structure, interacts with RTN4, UQCRC1 and UQCRC2. Widely expressed in mitochondria-enriched tissues. Found in heart, kidney, liver, brain and spinal cord.

The protein localises to the mitochondrion matrix. The protein resides in the mitochondrion outer membrane. The enzyme catalyses a 3-demethylubiquinone + NADH + 2 H(+) = a 3-demethylubiquinol + NAD(+). The catalysed reaction is a 3-demethylubiquinone + NADPH + 2 H(+) = a 3-demethylubiquinol + NADP(+). It carries out the reaction 3-demethylubiquinone-10 + NADH + 2 H(+) = 3-demethylubiquinol-10 + NAD(+). It catalyses the reaction 3-demethylubiquinone-10 + NADPH + 2 H(+) = 3-demethylubiquinol-10 + NADP(+). It functions in the pathway cofactor biosynthesis; ubiquinone biosynthesis. In terms of biological role, NAD(P)H oxidoreductase involved in the ubiquinone biosynthetic pathway. Required for the O-methyltransferase activity of COQ3. Able to catalyze the oxidoreduction of 3-demethylubiquinone into 3-demethylubiquinol in vitro. However, it is unclear if 3-demethylubiquinone constitutes a substrate in vivo. May also play a role in the regulation of retinal ganglion cell (RGC) neurite outgrowth, and hence in the development of the inner retina and optic nerve. Appears to be a potent inhibitor of regeneration following spinal cord injury. In Mus musculus (Mouse), this protein is NAD(P)H oxidoreductase RTN4IP1, mitochondrial.